The sequence spans 317 residues: Iron-uptake system-binding protein (317 aa).

A signal peptide spans 1 to 19; sequence MKKISLTLLILLLALTAAA. The N-palmitoyl cysteine moiety is linked to residue C20. C20 carries S-diacylglycerol cysteine lipidation. One can recognise a Fe/B12 periplasmic-binding domain in the interval 57–317; sequence IAITGSVESM…KAAAEKLTQN (261 aa).

It belongs to the bacterial solute-binding protein 8 family. The complex is composed of one ATP-binding protein (YusV), two transmembrane proteins (FeuB and FeuC) and a solute-binding protein (FeuA).

It is found in the cell membrane. The protein localises to the cytoplasm. It localises to the membrane raft. Its function is as follows. Involved in the uptake of iron. In terms of biological role, part of the ABC transporter complex FeuABC/YusV involved in import of the catecholate siderophores bacillibactin and enterobactin. This Bacillus subtilis (strain 168) protein is Iron-uptake system-binding protein (feuA).